The chain runs to 278 residues: Complement C1q tumor necrosis factor-related protein 6 (278 aa).

The N-terminal stretch at 1-46 (MQWLRVRESPGEATGHRVTMGTAALGPVWAALLLFLLMCEIPMVEL) is a signal peptide. Residue Asn-91 is glycosylated (N-linked (GlcNAc...) asparagine). Residues 97–138 (GDKGDPGPMGLPGYMGREGPQGEPGPQGSKGDKGEMGSPGAP) form the Collagen-like domain. A disordered region spans residues 99–135 (KGDPGPMGLPGYMGREGPQGEPGPQGSKGDKGEMGSP). The C1q domain maps to 139-259 (CQKRFFAFSV…KRQRENAIYS (121 aa)).

The protein localises to the secreted. The sequence is that of Complement C1q tumor necrosis factor-related protein 6 (C1QTNF6) from Homo sapiens (Human).